The chain runs to 445 residues: Cholesterol side-chain cleavage enzyme, mitochondrial (445 aa).

A mitochondrion-targeting transit peptide spans 1-36; sequence RGLPSRSVFLRGCQASLSTAQERLGHPGVPTREGVR.

Belongs to the cytochrome P450 family. In terms of assembly, interacts with FDX1/adrenodoxin. It depends on heme as a cofactor.

It localises to the mitochondrion inner membrane. The catalysed reaction is 6 reduced [adrenodoxin] + cholesterol + 3 O2 + 6 H(+) = 4-methylpentanal + pregnenolone + 6 oxidized [adrenodoxin] + 4 H2O. It catalyses the reaction 2 reduced [adrenodoxin] + cholesterol + O2 + 2 H(+) = (22R)-hydroxycholesterol + 2 oxidized [adrenodoxin] + H2O. The enzyme catalyses (22R)-hydroxycholesterol + 2 reduced [adrenodoxin] + O2 + 2 H(+) = (20R,22R)-20,22-dihydroxycholesterol + 2 oxidized [adrenodoxin] + H2O. It carries out the reaction (20R,22R)-20,22-dihydroxycholesterol + 2 reduced [adrenodoxin] + O2 + 2 H(+) = 4-methylpentanal + pregnenolone + 2 oxidized [adrenodoxin] + 2 H2O. The protein operates within lipid metabolism; C21-steroid hormone metabolism. Its pathway is steroid metabolism; cholesterol metabolism. A cytochrome P450 monooxygenase that catalyzes the side-chain hydroxylation and cleavage of cholesterol to pregnenolone, the precursor of most steroid hormones. Catalyzes three sequential oxidation reactions of cholesterol, namely the hydroxylation at C22 followed with the hydroxylation at C20 to yield 20R,22R-hydroxycholesterol that is further cleaved between C20 and C22 to yield the C21-steroid pregnenolone and 4-methylpentanal. Mechanistically, uses molecular oxygen inserting one oxygen atom into a substrate and reducing the second into a water molecule. Two electrons are provided by NADPH via a two-protein mitochondrial transfer system comprising flavoprotein FDXR (adrenodoxin/ferredoxin reductase) and nonheme iron-sulfur protein FDX1 or FDX2 (adrenodoxin/ferredoxin). The sequence is that of Cholesterol side-chain cleavage enzyme, mitochondrial (CYP11A1) from Oryctolagus cuniculus (Rabbit).